Here is a 287-residue protein sequence, read N- to C-terminus: Ret finger protein-like 4A (287 aa).

Residues 11-53 form an RING-type; degenerate zinc finger; it reads CPVCLKDLEEAVQLKCGYACCLQCLNSLQKEPDGEGLLCRFCS. The B30.2/SPRY domain occupies 78–276; sequence EPKLKSVLTM…LSICSVINPS (199 aa).

Interacts with PSMB1, UBE2A and CCNB1.

Its subcellular location is the cytoplasm. The protein localises to the nucleus. This is Ret finger protein-like 4A (RFPL4A) from Homo sapiens (Human).